The primary structure comprises 315 residues: Melanoma-associated antigen 9 (315 aa).

Residues 1 to 13 show a composition bias toward basic and acidic residues; sequence MSLEQRSPHCKPD. Residues 1–67 are disordered; that stretch reads MSLEQRSPHC…PQSPQGGASS (67 aa). Residues 50–67 show a composition bias toward low complexity; that stretch reads SAAGSSSPPQSPQGGASS. The 200-residue stretch at 108 to 307 folds into the MAGE domain; it reads LKLKVAELVH…ICYPSLYEEV (200 aa).

In terms of tissue distribution, expressed in many tumors of several types, such as melanoma, head and neck squamous cell carcinoma, lung carcinoma and breast carcinoma, but not in normal tissues except for testes and placenta.

In terms of biological role, not known, though may play a role in embryonal development and tumor transformation or aspects of tumor progression. The sequence is that of Melanoma-associated antigen 9 (MAGEA9) from Homo sapiens (Human).